The primary structure comprises 320 residues: GMP reductase (320 aa).

Residue Cys-174 is the Thioimidate intermediate of the active site. 203–226 (IIADGGLRVHGDIAKSIRMGASFC) lines the NADP(+) pocket.

The protein belongs to the IMPDH/GMPR family. GuaC type 2 subfamily.

The enzyme catalyses IMP + NH4(+) + NADP(+) = GMP + NADPH + 2 H(+). Its function is as follows. Catalyzes the irreversible NADPH-dependent deamination of GMP to IMP. It functions in the conversion of nucleobase, nucleoside and nucleotide derivatives of G to A nucleotides, and in maintaining the intracellular balance of A and G nucleotides. In Mycoplasma mycoides subsp. mycoides SC (strain CCUG 32753 / NCTC 10114 / PG1), this protein is GMP reductase.